We begin with the raw amino-acid sequence, 263 residues long: Small ribosomal subunit protein uS2m (263 aa).

Residues 1-15 constitute a mitochondrion transit peptide; the sequence is MLSRKLSPEQLVARR.

Belongs to the universal ribosomal protein uS2 family. As to quaternary structure, component of the mitochondrial small ribosomal subunit (mt-SSU). Mature yeast 74S mitochondrial ribosomes consist of a small (37S) and a large (54S) subunit. The 37S small subunit contains a 15S ribosomal RNA (15S mt-rRNA) and at least 32 different proteins. The 54S large subunit contains a 21S rRNA (21S mt-rRNA) and at least 45 different proteins.

The protein localises to the mitochondrion. Its function is as follows. Component of the mitochondrial ribosome (mitoribosome), a dedicated translation machinery responsible for the synthesis of mitochondrial genome-encoded proteins, including at least some of the essential transmembrane subunits of the mitochondrial respiratory chain. The mitoribosomes are attached to the mitochondrial inner membrane and translation products are cotranslationally integrated into the membrane. This chain is Small ribosomal subunit protein uS2m, found in Schizosaccharomyces pombe (strain 972 / ATCC 24843) (Fission yeast).